The chain runs to 447 residues: MKRIKRILAVLTIFALLATINAFTFVSLAQTNTIEIIIGNVKARPGDRIEVPVSLKNVPDKGIVSSDFVIEYDSKLFKVIELKAGDIVENPSESFSYNVVEKDEIIAVLYLEETGLGIEAIRTDGVFFTIVMEVSKDVKPGISPIKFESFGATADNDMNEMTPKLVEGKVEIIEASAPEATPTPGSTAGSGAGGGTGSSGSGQPSATPTPTATEKPSTTPKTTEQPHEDIPQSGGTGEHAPFLKGYPGGLFKPENNITRAEAAVIFAKLLGADENSAGKNSSITFKDLKDSHWAAWAIKYVTEQNLFGGYPDGTFMPDKSITRAEFATVTYKFLEKLGKIEQGTDVKTQLKDIEGHWAQKYIETLVAKGYIKGYPDETFRPQASIKRAESVALINRSLERGPLNGAVLEFTDVPVNYWAYKDIAEGVIYHSYKIDENGQEVMVEKLD.

A signal peptide spans 1–29 (MKRIKRILAVLTIFALLATINAFTFVSLA). A Cohesin domain is found at 30-180 (QTNTIEIIIG…EIIEASAPEA (151 aa)). Positions 30–180 (QTNTIEIIIG…EIIEASAPEA (151 aa)) are receptor binding site for duplicated segment of CipA. Residues 177–247 (APEATPTPGS…EHAPFLKGYP (71 aa)) form a disordered region. Residues 188–200 (AGSGAGGGTGSSG) show a composition bias toward gly residues. The span at 201-223 (SGQPSATPTPTATEKPSTTPKTT) shows a compositional bias: low complexity. SLH domains follow at residues 216–280 (PSTT…AGKN), 281–344 (SSIT…EQGT), and 345–408 (DVKT…GAVL). Residues 409-429 (EFTDVPVNYWAYKDIAEGVIY) enclose the SLH 4; truncated domain.

It localises to the secreted. Its subcellular location is the cell wall. The protein localises to the S-layer. Its function is as follows. Anchors the cellulosome to the cell surface by binding the duplicated segment that is present at the C-terminal end of CipA. The sequence is that of Cellulosome-anchoring protein (ancA) from Acetivibrio thermocellus (strain ATCC 27405 / DSM 1237 / JCM 9322 / NBRC 103400 / NCIMB 10682 / NRRL B-4536 / VPI 7372) (Clostridium thermocellum).